A 466-amino-acid chain; its full sequence is ATP synthase subunit beta (466 aa).

155-162 (GGAGVGKT) contacts ATP.

It belongs to the ATPase alpha/beta chains family. F-type ATPases have 2 components, CF(1) - the catalytic core - and CF(0) - the membrane proton channel. CF(1) has five subunits: alpha(3), beta(3), gamma(1), delta(1), epsilon(1). CF(0) has three main subunits: a(1), b(2) and c(9-12). The alpha and beta chains form an alternating ring which encloses part of the gamma chain. CF(1) is attached to CF(0) by a central stalk formed by the gamma and epsilon chains, while a peripheral stalk is formed by the delta and b chains.

Its subcellular location is the cell inner membrane. It carries out the reaction ATP + H2O + 4 H(+)(in) = ADP + phosphate + 5 H(+)(out). Produces ATP from ADP in the presence of a proton gradient across the membrane. The catalytic sites are hosted primarily by the beta subunits. This chain is ATP synthase subunit beta, found in Bordetella pertussis (strain Tohama I / ATCC BAA-589 / NCTC 13251).